Consider the following 218-residue polypeptide: Ribose-5-phosphate isomerase A (218 aa).

Substrate is bound by residues 28–31 (TGST), 81–84 (DGAD), and 94–97 (KGGG). Glu103 (proton acceptor) is an active-site residue. Lys121 is a binding site for substrate.

This sequence belongs to the ribose 5-phosphate isomerase family. As to quaternary structure, homodimer.

The catalysed reaction is aldehydo-D-ribose 5-phosphate = D-ribulose 5-phosphate. Its pathway is carbohydrate degradation; pentose phosphate pathway; D-ribose 5-phosphate from D-ribulose 5-phosphate (non-oxidative stage): step 1/1. Catalyzes the reversible conversion of ribose-5-phosphate to ribulose 5-phosphate. The sequence is that of Ribose-5-phosphate isomerase A from Shewanella sediminis (strain HAW-EB3).